A 180-amino-acid chain; its full sequence is Large ribosomal subunit protein uL5c (180 aa).

Belongs to the universal ribosomal protein uL5 family. As to quaternary structure, part of the 50S ribosomal subunit; contacts the 5S rRNA.

The protein resides in the plastid. The protein localises to the chloroplast. Functionally, binds 5S rRNA, forms part of the central protuberance of the 50S subunit. This chain is Large ribosomal subunit protein uL5c (rpl5), found in Tupiella akineta (Green alga).